A 1437-amino-acid chain; its full sequence is CRISPR-associated endoribonuclease Cas13a (1437 aa).

HEPN-like fold stretches follow at residues 460 to 626 (LNAS…AMFE) and 1101 to 1437 (EFRD…QLKN). Positions 1377 to 1419 (EVKEKKKPSDNNTGKGYSKRDRQQDRKEYDKYKEKKKKEGNFL) are disordered. A compositionally biased stretch (basic and acidic residues) spans 1394–1416 (SKRDRQQDRKEYDKYKEKKKKEG).

It belongs to the CRISPR-associated endoribonuclease Cas13a family. Requires a divalent metal cation as cofactor.

Target RNA acts as an activator for non-specific ssRNA degradation. Its function is as follows. CRISPR (clustered regularly interspaced short palindromic repeat), is an adaptive immune system that provides protection against mobile genetic elements (viruses, transposable elements and conjugative plasmids). CRISPR clusters contain sequences complementary to antecedent mobile elements and target invading nucleic acids. Unlike many single-component effectors, this CRISPR-Cas system targets RNA. CRISPR clusters are transcribed from pre-CRISPR RNA (crRNA) and processed into crRNA by this protein. Cleaves linear target ssRNA in a pre-crRNA-dependent fashion, preferentially around A residues. Binding a viable target RNA target activates this protein for non-specific RNA degradation in vitro (called collateral RNA degradation), but it is not very sensitive as it requires nanomolar levels of viable target RNA. The protein is CRISPR-associated endoribonuclease Cas13a of Lachnospiraceae bacterium (strain NK4A179).